Reading from the N-terminus, the 352-residue chain is Potassium/proton antiporter CemA (352 aa).

The next 3 membrane-spanning stretches (helical) occupy residues 52-72 (VLVSLQCLLTLIIIPLFIHFF), 227-247 (IAALTNLFADLLTLFSLIILF), and 312-332 (IILLFVATFPVLLDSVIKYWI).

Belongs to the CemA family.

Its subcellular location is the plastid. It localises to the chloroplast inner membrane. The catalysed reaction is K(+)(in) + H(+)(out) = K(+)(out) + H(+)(in). In terms of biological role, contributes to K(+)/H(+) antiport activity by supporting proton efflux to control proton extrusion and homeostasis in chloroplasts in a light-dependent manner to modulate photosynthesis. Prevents excessive induction of non-photochemical quenching (NPQ) under continuous-light conditions. Indirectly promotes efficient inorganic carbon uptake into chloroplasts. The polypeptide is Potassium/proton antiporter CemA (Oltmannsiellopsis viridis (Marine flagellate)).